The primary structure comprises 202 residues: Superoxide dismutase [Mn] (202 aa).

The Mn(2+) site is built by His-27, His-82, Asp-164, and His-168.

Belongs to the iron/manganese superoxide dismutase family. In terms of assembly, homodimer. Requires Mn(2+) as cofactor.

It catalyses the reaction 2 superoxide + 2 H(+) = H2O2 + O2. In terms of biological role, destroys superoxide anion radicals which are normally produced within the cells and which are toxic to biological systems. In Listeria monocytogenes serovar 1/2a (strain ATCC BAA-679 / EGD-e), this protein is Superoxide dismutase [Mn] (sodA).